We begin with the raw amino-acid sequence, 313 residues long: Cytosolic Fe-S cluster assembly factor NUBP1 homolog (313 aa).

The segment at 1–25 is disordered; that stretch reads MSDVPEDANAGCPGTGSAGAGKASG. Cys12, Cys26, Cys29, and Cys35 together coordinate [4Fe-4S] cluster. 66 to 73 lines the ATP pocket; it reads GKGGVGKS. The [4Fe-4S] cluster site is built by Cys240 and Cys243.

This sequence belongs to the Mrp/NBP35 ATP-binding proteins family. NUBP1/NBP35 subfamily. As to quaternary structure, heterotetramer of 2 NUBP1 and 2 NUBP2 chains. [4Fe-4S] cluster is required as a cofactor.

It localises to the cytoplasm. It is found in the cell projection. Component of the cytosolic iron-sulfur (Fe/S) protein assembly (CIA) machinery. Required for maturation of extramitochondrial Fe-S proteins. The NUBP1-NUBP2 heterotetramer forms a Fe-S scaffold complex, mediating the de novo assembly of an Fe-S cluster and its transfer to target apoproteins. Regulates cilium formation and structure. The sequence is that of Cytosolic Fe-S cluster assembly factor NUBP1 homolog from Caenorhabditis briggsae.